The chain runs to 356 residues: Phosphotriesterase-related protein (356 aa).

Positions 23, 25, 175, 207, 236, and 304 each coordinate a divalent metal cation.

This sequence belongs to the metallo-dependent hydrolases superfamily. Phosphotriesterase family. A divalent metal cation is required as a cofactor.

The sequence is that of Phosphotriesterase-related protein from Aedes aegypti (Yellowfever mosquito).